The primary structure comprises 780 residues: Protein phosphatase 1 regulatory subunit 21 (780 aa).

Coiled coils occupy residues 1-209 and 556-605; these read MASA…NLHE and ESRE…DRLR. A disordered region spans residues 84 to 104; sequence EPRGKKNKKSGESSSQLSQEQ. The segment covering 95–104 has biased composition (low complexity); that stretch reads ESSSQLSQEQ. T652 is subject to Phosphothreonine. Residues 694 to 742 are a coiled coil; sequence AECRALSKRLALAEKSKETLTEEMRLASQNISRLQDELMTTKRSYEDQL.

Component of the FERRY complex, composed of five subunits: TBCK, PPP1R21, FERRY3, CRYZL1 and GATAD1, with a ratio of 1:2:1:2:4 respectively. PPP1R21 serves as a binding hub connecting all five complex subunits to mediate the binding to specific mitochondrial mRNAs. Interacts with the GTP-bound form of RAB5A (via its C-terminal region); linking the mRNP complex onto trafficking endosomes for active mRNA transport. Interacts with PPP1CA. Expressed at 16 dpc in the cortex (at protein level).

The protein resides in the early endosome. Its function is as follows. Component of the FERRY complex (Five-subunit Endosomal Rab5 and RNA/ribosome intermediary). The FERRY complex directly interacts with mRNAs and RAB5A, and functions as a RAB5A effector involved in the localization and the distribution of specific mRNAs most likely by mediating their endosomal transport. The complex recruits mRNAs and ribosomes to early endosomes through direct mRNA-interaction. In the complex, PPP1R21 serves as a binding hub connecting all five complex subunits and mediating the binding to mRNA and early endosomes via RAB5A. Putative regulator of protein phosphatase 1 (PP1) activity. May play a role in the endosomal sorting process or in endosome maturation pathway. The polypeptide is Protein phosphatase 1 regulatory subunit 21 (Ppp1r21) (Mus musculus (Mouse)).